The primary structure comprises 369 residues: Histidinol-phosphate aminotransferase 2 (369 aa).

Residue lysine 227 is modified to N6-(pyridoxal phosphate)lysine.

Belongs to the class-II pyridoxal-phosphate-dependent aminotransferase family. Histidinol-phosphate aminotransferase subfamily. Homodimer. It depends on pyridoxal 5'-phosphate as a cofactor.

The catalysed reaction is L-histidinol phosphate + 2-oxoglutarate = 3-(imidazol-4-yl)-2-oxopropyl phosphate + L-glutamate. Its pathway is amino-acid biosynthesis; L-histidine biosynthesis; L-histidine from 5-phospho-alpha-D-ribose 1-diphosphate: step 7/9. In Mesorhizobium japonicum (strain LMG 29417 / CECT 9101 / MAFF 303099) (Mesorhizobium loti (strain MAFF 303099)), this protein is Histidinol-phosphate aminotransferase 2 (hisC2).